The chain runs to 437 residues: 3-phosphoshikimate 1-carboxyvinyltransferase (437 aa).

Residues K22, S23, and R27 each contribute to the 3-phosphoshikimate site. K22 lines the phosphoenolpyruvate pocket. Phosphoenolpyruvate-binding residues include G96 and R125. Positions 170, 172, 323, and 350 each coordinate 3-phosphoshikimate. Phosphoenolpyruvate is bound at residue Q172. D323 acts as the Proton acceptor in catalysis. Phosphoenolpyruvate-binding residues include R354 and R396.

This sequence belongs to the EPSP synthase family. In terms of assembly, monomer.

It localises to the cytoplasm. It carries out the reaction 3-phosphoshikimate + phosphoenolpyruvate = 5-O-(1-carboxyvinyl)-3-phosphoshikimate + phosphate. Its pathway is metabolic intermediate biosynthesis; chorismate biosynthesis; chorismate from D-erythrose 4-phosphate and phosphoenolpyruvate: step 6/7. Functionally, catalyzes the transfer of the enolpyruvyl moiety of phosphoenolpyruvate (PEP) to the 5-hydroxyl of shikimate-3-phosphate (S3P) to produce enolpyruvyl shikimate-3-phosphate and inorganic phosphate. The protein is 3-phosphoshikimate 1-carboxyvinyltransferase of Synechococcus sp. (strain RCC307).